The primary structure comprises 236 residues: MDLTLLQWGDAGWGDELARGAMMTVVVAACSYFFGIIFGSLFAAAKLSRFWSLRLLGDVYTTVVRGVPELLIIFLVFFGGGTLLRTIANGLFGYEGYIEPPIFVIGVLCISVSAGAYATEVIRAAVLAVPPGQIEAAKSIGMGPWLRLRRVLIPQAARFALPGLGNVWQFTLKDTSLISVVGLVEIMRTAAMGAGSTKQPFTFYITAFVIFLLLSSVSNRGFLKAEKWANRGVRSQ.

Residues 21-222 (AMMTVVVAAC…LLSSVSNRGF (202 aa)) enclose the ABC transmembrane type-1 domain. A run of 4 helical transmembrane segments spans residues 25–45 (VVVA…FAAA), 63–83 (VVRG…GGTL), 102–122 (IFVI…TEVI), and 199–219 (QPFT…SVSN).

It belongs to the binding-protein-dependent transport system permease family. HisMQ subfamily.

The protein localises to the cell inner membrane. In terms of biological role, component of the nopaline active transport system probably consisting of four subunits: Q, M, P and T. This system is also capable of transporting octopine provided that catabolic functions are induced with nopaline. This Agrobacterium fabrum (strain C58 / ATCC 33970) (Agrobacterium tumefaciens (strain C58)) protein is Nopaline transport system permease protein NocQ (nocQ).